Here is a 301-residue protein sequence, read N- to C-terminus: Recombination-associated protein RdgC (301 aa).

This sequence belongs to the RdgC family.

The protein resides in the cytoplasm. It localises to the nucleoid. Functionally, may be involved in recombination. The protein is Recombination-associated protein RdgC of Xanthomonas oryzae pv. oryzae (strain MAFF 311018).